The following is a 127-amino-acid chain: Fatty acid-binding protein, liver (127 aa).

Methionine 1 carries the post-translational modification N-acetylmethionine. Residue serine 11 is modified to Phosphoserine. 2 positions are modified to N6-succinyllysine: lysine 31 and lysine 36. Phosphoserine is present on serine 39. Lysine 46 is subject to N6-succinyllysine. The residue at position 51 (threonine 51) is a Phosphothreonine. N6-succinyllysine occurs at positions 57 and 78. N6-acetyllysine; alternate is present on lysine 84. Lysine 84 is modified (N6-succinyllysine; alternate). The residue at position 90 (lysine 90) is an N6-succinyllysine. The residue at position 100 (serine 100) is a Phosphoserine. Lysine 121 bears the N6-succinyllysine mark.

Belongs to the calycin superfamily. Fatty-acid binding protein (FABP) family.

It localises to the cytoplasm. Functionally, plays a role in lipoprotein-mediated cholesterol uptake in hepatocytes. Binds cholesterol. Binds free fatty acids and their coenzyme A derivatives, bilirubin, and some other small molecules in the cytoplasm. May be involved in intracellular lipid transport. This Mus musculus (Mouse) protein is Fatty acid-binding protein, liver (Fabp1).